Here is a 374-residue protein sequence, read N- to C-terminus: Beta sliding clamp (374 aa).

This sequence belongs to the beta sliding clamp family. Forms a ring-shaped head-to-tail homodimer around DNA which binds and tethers DNA polymerases and other proteins to the DNA. The DNA replisome complex has a single clamp-loading complex (3 tau and 1 each of delta, delta', psi and chi subunits) which binds 3 Pol III cores (1 core on the leading strand and 2 on the lagging strand) each with a beta sliding clamp dimer. Additional proteins in the replisome are other copies of gamma, psi and chi, Ssb, DNA helicase and RNA primase.

It is found in the cytoplasm. In terms of biological role, confers DNA tethering and processivity to DNA polymerases and other proteins. Acts as a clamp, forming a ring around DNA (a reaction catalyzed by the clamp-loading complex) which diffuses in an ATP-independent manner freely and bidirectionally along dsDNA. Initially characterized for its ability to contact the catalytic subunit of DNA polymerase III (Pol III), a complex, multichain enzyme responsible for most of the replicative synthesis in bacteria; Pol III exhibits 3'-5' exonuclease proofreading activity. The beta chain is required for initiation of replication as well as for processivity of DNA replication. This chain is Beta sliding clamp (dnaN), found in Helicobacter pylori (strain ATCC 700392 / 26695) (Campylobacter pylori).